The sequence spans 287 residues: Gliotoxin thiomethyltransferase GtmA (287 aa).

Residues Thr-27 and Ala-54 each contribute to the S-adenosyl-L-methionine site. Cys-55 and Cys-80 are disulfide-bonded. 6 residues coordinate S-adenosyl-L-methionine: Asp-82, Met-87, Asn-109, Ala-110, Ala-126, and Arg-248.

This sequence belongs to the class I-like SAM-binding methyltransferase superfamily.

Its subcellular location is the cytoplasm. The catalysed reaction is a thiol + S-adenosyl-L-methionine = a methyl thioether + S-adenosyl-L-homocysteine + H(+). Functionally, S-methyltransferase that catalyzes the irreversible conversion of the secondary metabolite gliotoxin to bis(methylthio)gliotoxin (BmGT). Gliotoxin, a member of the epipolythiodioxopiperazine (ETP) class of toxins, is characterized by a disulfide bridged cyclic dipeptide. Its thiol groups are essential for bioactivity, as they conjugate to sulfur-containing proteins, disturb the intracellular redox equilibrium, and generate reactive oxygen species by cycling between reduced and oxidized states. The enzyme prevents self-intoxication of the fungus by irreversible conversion of the toxic gliotoxin to a biologically inactive bis-thiomethylated derivative. Appears to negatively regulate gliotoxin biosynthesis. In Aspergillus fumigatus (strain ATCC MYA-4609 / CBS 101355 / FGSC A1100 / Af293) (Neosartorya fumigata), this protein is Gliotoxin thiomethyltransferase GtmA.